Reading from the N-terminus, the 409-residue chain is Pectin acetylesterase 4 (409 aa).

Residues 1 to 32 form the signal peptide; that stretch reads MVIRSLLQCRTWSKSDWLLASIGIVLIVYSFS. N-linked (GlcNAc...) asparagine glycosylation is found at Asn36 and Asn163. Active-site charge relay system residues include Ser199, Asp295, and His362. 2 N-linked (GlcNAc...) asparagine glycosylation sites follow: Asn379 and Asn406.

Belongs to the pectinacetylesterase family.

It localises to the secreted. Its subcellular location is the cell wall. Hydrolyzes acetyl esters in homogalacturonan regions of pectin. In type I primary cell wall, galacturonic acid residues of pectin can be acetylated at the O-2 and O-3 positions. Decreasing the degree of acetylation of pectin gels in vitro alters their physical properties. In Arabidopsis thaliana (Mouse-ear cress), this protein is Pectin acetylesterase 4.